The following is a 273-amino-acid chain: Elongation factor Ts (273 aa).

Positions 80-83 (TDFV) are involved in Mg(2+) ion dislocation from EF-Tu.

This sequence belongs to the EF-Ts family.

It is found in the cytoplasm. Associates with the EF-Tu.GDP complex and induces the exchange of GDP to GTP. It remains bound to the aminoacyl-tRNA.EF-Tu.GTP complex up to the GTP hydrolysis stage on the ribosome. This chain is Elongation factor Ts, found in Tropheryma whipplei (strain Twist) (Whipple's bacillus).